Here is a 245-residue protein sequence, read N- to C-terminus: Demethylmenaquinone methyltransferase (245 aa).

S-adenosyl-L-methionine is bound by residues threonine 70, aspartate 90, and aspartate 118–cysteine 119.

It belongs to the class I-like SAM-binding methyltransferase superfamily. MenG/UbiE family.

It carries out the reaction a 2-demethylmenaquinol + S-adenosyl-L-methionine = a menaquinol + S-adenosyl-L-homocysteine + H(+). Its pathway is quinol/quinone metabolism; menaquinone biosynthesis; menaquinol from 1,4-dihydroxy-2-naphthoate: step 2/2. Its function is as follows. Methyltransferase required for the conversion of demethylmenaquinol (DMKH2) to menaquinol (MKH2). This chain is Demethylmenaquinone methyltransferase, found in Bacteroides fragilis (strain ATCC 25285 / DSM 2151 / CCUG 4856 / JCM 11019 / LMG 10263 / NCTC 9343 / Onslow / VPI 2553 / EN-2).